The following is a 402-amino-acid chain: MAVCTVYTIPTTTHLGSSFNQNNKQVFFNYKRSSSSNNTLFTTRPSYVITCSQQQTIVIGLAADSGCGKSTFMRRLTSVFGGAAEPPKGGNPDSNTLISDTTTVICLDDFHSLDRNGRKVEKVTALDPKANDFDLMYEQVKALKEGKAVDKPIYNHVSGLLDPPELIQPPKILVIEGLHPMYDARVRELLDFSIYLDISNEVKFAWKIQRDMKERGHSLESIKASIESRKPDFDAYIDPQKQHADVVIEVLPTELIPDDDEGKVLRVRMIQKEGVKFFNPVYLFDEGSTISWIPCGRKLTCSYPGIKFSYGPDTFYGNEVTVVEMDGMFDRLDELIYVESHLSNLSTKFYGEVTQQMLKHQNFPGSNNGTGFFQTIIGLKIRDLFEQLVASRSTATATAAKA.

The N-terminal 51 residues, 1-51 (MAVCTVYTIPTTTHLGSSFNQNNKQVFFNYKRSSSSNNTLFTTRPSYVITC), are a transit peptide targeting the chloroplast. Cysteine 67 and cysteine 106 are oxidised to a cystine.

This sequence belongs to the phosphoribulokinase family.

The protein localises to the plastid. Its subcellular location is the chloroplast. It carries out the reaction D-ribulose 5-phosphate + ATP = D-ribulose 1,5-bisphosphate + ADP + H(+). Its pathway is carbohydrate biosynthesis; Calvin cycle. With respect to regulation, light regulated via thioredoxin by reversible oxidation/reduction of sulfhydryl/disulfide groups. This Spinacia oleracea (Spinach) protein is Phosphoribulokinase, chloroplastic.